The primary structure comprises 26 residues: Acyl carrier protein (26 aa).

In terms of domain architecture, Carrier spans 2 to 26 (SDIEQRIKQAVAEQLGMRAEEIKNE).

It belongs to the acyl carrier protein (ACP) family. Post-translationally, 4'-phosphopantetheine is transferred from CoA to a specific serine of apo-ACP by AcpS. This modification is essential for activity because fatty acids are bound in thioester linkage to the sulfhydryl of the prosthetic group.

It is found in the cytoplasm. Its pathway is lipid metabolism; fatty acid biosynthesis. In terms of biological role, carrier of the growing fatty acid chain in fatty acid biosynthesis. This chain is Acyl carrier protein (acpP), found in Acinetobacter calcoaceticus.